We begin with the raw amino-acid sequence, 92 residues long: uncharacterized protein (92 aa).

A disordered region spans residues 1 to 92; that stretch reads MSDAAAPAQA…PSPSQQQVAA (92 aa).

This is an uncharacterized protein from Caenorhabditis elegans.